Reading from the N-terminus, the 417-residue chain is MKVIVLGSGVIGVTAAWYLAEAGHEVIVLDRQPGPALETSYANAGQVSPGYASPWAAPGIPLKAIKWMLRRHAPLFIKPDGTWQQLRWMWQLLQNCTGTRYEQNKARMVRLAEYSRDCLDQLRADTGIEYEGRQRGTLQLFRTREQLDAALRDIEVLRFAHVPFELLPPSLLTKAEPALEHVKHKLTGGLWLPRDETGDCRLFTVRLADMAAARGVQFRYGQEISHLAIESGNVNGVVVSGVRVQADAYVVALAAYSVDVLKGVLDLPVYPVKGYSITVPIIDEALAPVSTVLDETYKTAVTRFDNRIRVGGMAELVGFDRRLSPRREGTLKLIVHDLFPGAADLSQTSFWTGLRPMTPDGPPIIGATPIPNLYLNTGHGTLGWTMACGSGKLLADIISGKKTDIQHDDLGIGRYAK.

3-17 (VIVLGSGVIGVTAAW) contacts FAD.

This sequence belongs to the DadA oxidoreductase family. The cofactor is FAD.

The catalysed reaction is a D-alpha-amino acid + A + H2O = a 2-oxocarboxylate + AH2 + NH4(+). It functions in the pathway amino-acid degradation; D-alanine degradation; NH(3) and pyruvate from D-alanine: step 1/1. In terms of biological role, oxidative deamination of D-amino acids. The sequence is that of D-amino acid dehydrogenase from Methylobacillus flagellatus (strain ATCC 51484 / DSM 6875 / VKM B-1610 / KT).